Consider the following 170-residue polypeptide: Peptide deformylase (170 aa).

2 residues coordinate Fe cation: cysteine 94 and histidine 136. Residue glutamate 137 is part of the active site. Histidine 140 serves as a coordination point for Fe cation.

It belongs to the polypeptide deformylase family. Requires Fe(2+) as cofactor.

It catalyses the reaction N-terminal N-formyl-L-methionyl-[peptide] + H2O = N-terminal L-methionyl-[peptide] + formate. Its function is as follows. Removes the formyl group from the N-terminal Met of newly synthesized proteins. Requires at least a dipeptide for an efficient rate of reaction. N-terminal L-methionine is a prerequisite for activity but the enzyme has broad specificity at other positions. This chain is Peptide deformylase, found in Wolinella succinogenes (strain ATCC 29543 / DSM 1740 / CCUG 13145 / JCM 31913 / LMG 7466 / NCTC 11488 / FDC 602W) (Vibrio succinogenes).